Here is a 635-residue protein sequence, read N- to C-terminus: Cationic amino acid transporter 2, vacuolar (635 aa).

Residues 1 to 48 (MGFLVDTQKEGGGHSWGYVRSLVRRKQVDSANGQSHGHQLARALTVPH) are Cytoplasmic-facing. Residues 49–69 (LVAIGVGATIGAGVYILVGTV) form a helical membrane-spanning segment. The Vacuolar portion of the chain corresponds to 70–76 (AREHSGP). Residues 77–97 (SLALSFLIAGIAAGLSAFCYA) traverse the membrane as a helical segment. Over 98-108 (ELSSRCPSAGS) the chain is Cytoplasmic. The chain crosses the membrane as a helical span at residues 109–131 (AYHYSYICVGEGVAWIIGWALIL). Residues 132–171 (EYTIGGSAVARGISPNLALIFGGEDGLPAILARHQIPGLD) lie on the Vacuolar side of the membrane. The chain crosses the membrane as a helical span at residues 172–192 (IVVDPCAAILVFVVTGLLCMG). At 193 to 200 (IKESTFAQ) the chain is on the cytoplasmic side. Residues 201–221 (GIVTAVNVCVLLFVIVAGSYL) traverse the membrane as a helical segment. At 222–235 (GFKTGWPGYELPTG) the chain is on the vacuolar side. The helical transmembrane segment at 236–256 (FFPFGVDGMFAGSATVFFAFI) threads the bilayer. Over 257–280 (GFDSVASTAEEVRNPQRDLPIGIG) the chain is Cytoplasmic. A helical transmembrane segment spans residues 281-301 (LALLLCCSLYMMVSIVIVGLI). Over 302-324 (PYYAMDPDTPISSAFASHDMQWA) the chain is Vacuolar. Residues 325-345 (VYLITLGAVMALCSALMGALL) traverse the membrane as a helical segment. The Cytoplasmic portion of the chain corresponds to 346–376 (PQPRILMAMARDGLLPSIFSDINKRTQVPVK). A helical membrane pass occupies residues 377–397 (ATVATGLCAATLAFFMDVSQL). Alanine 398 is a topological domain (vacuolar). Residues 399-419 (GMVSVGTLLAFTMVAISVLIL) form a helical membrane-spanning segment. The Cytoplasmic portion of the chain corresponds to 420–493 (RYVPPDEQPL…CLVLSEETRR (74 aa)). The helical transmembrane segment at 494 to 514 (IVAGWSIMFTCVGAFLLSYAA) threads the bilayer. The Vacuolar segment spans residues 515 to 524 (SSLSFPGLIR). The helical transmembrane segment at 525 to 545 (YPLCGVGGCLLLAGLIALSSI) threads the bilayer. Residues 546–560 (DQDDARHTFGHSGGY) lie on the Cytoplasmic side of the membrane. The chain crosses the membrane as a helical span at residues 561-581 (MCPFVPLLPIICILINMYLLV). At 582 to 585 (NLGS) the chain is on the vacuolar side. A helical transmembrane segment spans residues 586–606 (ATWARVSVWLLIGVIVYVFYG). At 607 to 635 (RKNSSLANAVYVTTAHAEEIYREHEGSLA) the chain is on the cytoplasmic side.

The protein belongs to the amino acid-polyamine-organocation (APC) superfamily. Cationic amino acid transporter (CAT) (TC 2.A.3.3) family. As to expression, expressed in roots, stems, flowers, leaves, and siliques.

It is found in the vacuole membrane. Permease involved in the transport of the cationic amino acids. The protein is Cationic amino acid transporter 2, vacuolar (CAT2) of Arabidopsis thaliana (Mouse-ear cress).